A 443-amino-acid polypeptide reads, in one-letter code: Frizzled/smoothened-like sans CRD protein E (443 aa).

An N-terminal signal peptide occupies residues 1 to 23 (MISHIKKFINLYTIVFLLYILYS). The Extracellular portion of the chain corresponds to 24 to 83 (NENFFVKGQKLPPGFCPSPLIYRNTTDRQSDIDIGFQFLGETNCVQPCPSLILTENEWNK). A glycan (N-linked (GlcNAc...) asparagine) is linked at Asn-47. A helical transmembrane segment spans residues 84 to 104 (VFNMSLVAGTISMFALIFLII). Residues 105–120 (TYSPLVNNIKDYTRHT) are Cytoplasmic-facing. Residues 121 to 141 (VGILFLFSGILIAMTTDGRQL) traverse the membrane as a helical segment. Topologically, residues 142–166 (WDIDLGFKKYCPEPGRFARQSDSKC) are extracellular. The helical transmembrane segment at 167-187 (LVTAIFFQFGCVTALLWWAAI) threads the bilayer. Residues 188–203 (SVDLWITIKKIKISKK) lie on the Cytoplasmic side of the membrane. A helical membrane pass occupies residues 204-224 (LFIIYTIAVNIVTIVLTFGPV). At 225–248 (GSKQYGYIDAAIGCWLMDLKYQVG) the chain is on the extracellular side. A helical membrane pass occupies residues 249–269 (YFWAPVGFCLCVGCVSIVLIL). Residues 270–289 (KEIYNVSDAVKKKLLAKHLK) are Cytoplasmic-facing. Residues 290 to 310 (PLMLIILMLTEFIYMFIFYSY) traverse the membrane as a helical segment. Residues 311 to 350 (TTSKKNHYHDIIEEYVVCLFVHAANPSVCKIGSTISPSAH) lie on the Extracellular side of the membrane. A helical membrane pass occupies residues 351–371 (FFFHLCIRLMGLEVLIFYGFT). The Cytoplasmic segment spans residues 372-443 (RQTRKIWMRS…SGIDDSKHDP (72 aa)). Composition is skewed to low complexity over residues 397–410 (SSSN…NKTS) and 419–432 (ESSE…QSIE). Residues 397–443 (SSSNDSKSSNNKTSGRVTGGFGESSEQSNEPEQSIELSGIDDSKHDP) form a disordered region.

It belongs to the G-protein coupled receptor Fz/Smo family.

The protein resides in the membrane. In Dictyostelium discoideum (Social amoeba), this protein is Frizzled/smoothened-like sans CRD protein E (fscE).